The following is a 389-amino-acid chain: Phosphopentomutase (389 aa).

Mn(2+) is bound by residues Asp9, Asp282, His287, Asp323, His324, and His335.

This sequence belongs to the phosphopentomutase family. Mn(2+) is required as a cofactor.

Its subcellular location is the cytoplasm. The catalysed reaction is 2-deoxy-alpha-D-ribose 1-phosphate = 2-deoxy-D-ribose 5-phosphate. It carries out the reaction alpha-D-ribose 1-phosphate = D-ribose 5-phosphate. It functions in the pathway carbohydrate degradation; 2-deoxy-D-ribose 1-phosphate degradation; D-glyceraldehyde 3-phosphate and acetaldehyde from 2-deoxy-alpha-D-ribose 1-phosphate: step 1/2. Isomerase that catalyzes the conversion of deoxy-ribose 1-phosphate (dRib-1-P) and ribose 1-phosphate (Rib-1-P) to deoxy-ribose 5-phosphate (dRib-5-P) and ribose 5-phosphate (Rib-5-P), respectively. This Kosmotoga olearia (strain ATCC BAA-1733 / DSM 21960 / TBF 19.5.1) protein is Phosphopentomutase.